The following is a 161-amino-acid chain: Transcriptional repressor NrdR (161 aa).

Over residues 1-11 (MRCPSCSSLDT) the composition is skewed to polar residues. The segment at 1-20 (MRCPSCSSLDTQVKDSRPTE) is disordered. A zinc finger lies at 3 to 34 (CPSCSSLDTQVKDSRPTEDSAVIRRRRVCMAC). The region spanning 49–139 (LTVIKRNGRR…VYRNFREAKD (91 aa)) is the ATP-cone domain.

The protein belongs to the NrdR family. It depends on Zn(2+) as a cofactor.

Functionally, negatively regulates transcription of bacterial ribonucleotide reductase nrd genes and operons by binding to NrdR-boxes. The chain is Transcriptional repressor NrdR from Rhodopseudomonas palustris (strain BisB18).